A 415-amino-acid chain; its full sequence is Methylmalonic aciduria type A homolog, mitochondrial (415 aa).

The N-terminal 62 residues, 1–62 (MTISTLLLSP…LLSDGFRRTL (62 aa)), are a transit peptide targeting the mitochondrion. Residues 147–155 (GPPGAGKST), Asp-289, and 325–327 (SAR) contribute to the GTP site.

It belongs to the SIMIBI class G3E GTPase family. ArgK/MeaB subfamily. As to quaternary structure, homodimer. Interacts with MMUT (the apoenzyme form); the interaction is GTP dependent.

The protein resides in the mitochondrion. It localises to the cytoplasm. It catalyses the reaction GTP + H2O = GDP + phosphate + H(+). Its activity is regulated as follows. GTPase activity is stimulated by MMUT. In terms of biological role, GTPase, binds and hydrolyzes GTP. Involved in intracellular vitamin B12 metabolism, mediates the transport of cobalamin (Cbl) into mitochondria for the final steps of adenosylcobalamin (AdoCbl) synthesis. Functions as a G-protein chaperone that assists AdoCbl cofactor delivery from MMAB to the methylmalonyl-CoA mutase (MMUT). Plays a dual role as both a protectase and a reactivase for MMUT. Protects MMUT from progressive inactivation by oxidation by decreasing the rate of the formation of the oxidized inactive cofactor hydroxocobalamin (OH2Cbl). Additionally acts a reactivase by promoting the replacement of OH2Cbl by the active cofactor AdoCbl, restoring the activity of MMUT in the presence and hydrolysis of GTP. The sequence is that of Methylmalonic aciduria type A homolog, mitochondrial from Mus musculus (Mouse).